Reading from the N-terminus, the 85-residue chain is Large ribosomal subunit protein bL31B (85 aa).

This sequence belongs to the bacterial ribosomal protein bL31 family. Type B subfamily. Part of the 50S ribosomal subunit.

This is Large ribosomal subunit protein bL31B from Staphylococcus haemolyticus (strain JCSC1435).